Here is a 182-residue protein sequence, read N- to C-terminus: CDP-diacylglycerol--glycerol-3-phosphate 3-phosphatidyltransferase (182 aa).

Topologically, residues 1-12 (MQLNIPTWLTLF) are cytoplasmic. A helical membrane pass occupies residues 13 to 37 (RVVLIPFFVLAFYLPFVWAPMVCAI). The Periplasmic segment spans residues 38–60 (IFVFAAATDWFDGFLARRWKQTT). A helical transmembrane segment spans residues 61–81 (RFGAFLDPVADKVMVAVALVL). Over 82–86 (VAEHY) the chain is Cytoplasmic. A helical transmembrane segment spans residues 87 to 107 (HSWWITLPAATMIAREIIISS). Over 108 to 145 (LREWMAEIGKRSSVAVSWVGKVKTMAQMGSLVGLLWRP) the chain is Periplasmic. The chain crosses the membrane as a helical span at residues 146 to 168 (DHNVELASFVLLYIAAVLTFWSM). Over 169 to 181 (FQYLNAAWSDLLE) the chain is Cytoplasmic.

Belongs to the CDP-alcohol phosphatidyltransferase class-I family.

It is found in the cell inner membrane. It catalyses the reaction a CDP-1,2-diacyl-sn-glycerol + sn-glycerol 3-phosphate = a 1,2-diacyl-sn-glycero-3-phospho-(1'-sn-glycero-3'-phosphate) + CMP + H(+). It functions in the pathway phospholipid metabolism; phosphatidylglycerol biosynthesis; phosphatidylglycerol from CDP-diacylglycerol: step 1/2. Functionally, catalyzes the conversion of cytidine diphosphate diacylglycerol (CDP-DG) and glycerol 3-phosphate into phosphatidylglycerol. Essential for the synthesis of anionic phospholipids, thereby playing a role in balancing the ratio of zwitterionic and anionic phospholipids, which is thought to be important for normal membrane function. The sequence is that of CDP-diacylglycerol--glycerol-3-phosphate 3-phosphatidyltransferase from Yersinia pestis bv. Antiqua (strain Antiqua).